The primary structure comprises 208 residues: MSQVIYITAHPLDEMVSNSMAVGKAFIESYQESHPDDEVIHIDLFKDEVPEIDADVFSGWGKLQNGETLTEVEQHKVSRLTEIVDQFVSADKYVIATPMWNLSFPPAVKRYFDAVSVAGKSFKYTSEGPQGLLTDKTALHIQSRGGFYSEGPAAEVEMGDRYIRTIFSFLGVPKYKLIAVEGHNKVPERAEEIKLNAIQQAESFAKEF.

FMN is bound by residues 17 to 19 (SNS), 99 to 102 (MWNL), and 143 to 146 (SRGG).

The protein belongs to the azoreductase type 1 family. Homodimer. FMN is required as a cofactor.

It catalyses the reaction 2 a quinone + NADH + H(+) = 2 a 1,4-benzosemiquinone + NAD(+). The enzyme catalyses N,N-dimethyl-1,4-phenylenediamine + anthranilate + 2 NAD(+) = 2-(4-dimethylaminophenyl)diazenylbenzoate + 2 NADH + 2 H(+). Its function is as follows. Quinone reductase that provides resistance to thiol-specific stress caused by electrophilic quinones. Also exhibits azoreductase activity. Catalyzes the reductive cleavage of the azo bond in aromatic azo compounds to the corresponding amines. The chain is FMN-dependent NADH:quinone oxidoreductase from Staphylococcus carnosus (strain TM300).